The chain runs to 434 residues: Guanosine-inosine kinase (434 aa).

Residues 40–45 (DQTLVD), 93–97 (GTIGN), and arginine 198 each bind GMP. ATP-binding positions include 284–289 (TAGPIG), glycine 357, and asparagine 402.

It belongs to the carbohydrate kinase PfkB family. Mg(2+) is required as a cofactor.

It carries out the reaction guanosine + ATP = GMP + ADP + H(+). The catalysed reaction is inosine + ATP = IMP + ADP + H(+). The protein operates within purine metabolism; IMP biosynthesis via salvage pathway; IMP from inosine: step 1/1. It participates in purine metabolism; GMP biosynthesis via salvage pathway. Catalyzes the phosphorylation of guanosine and inosine to GMP and IMP, respectively. In Escherichia coli O157:H7, this protein is Guanosine-inosine kinase.